Here is a 143-residue protein sequence, read N- to C-terminus: Transcriptional regulator MraZ (143 aa).

2 consecutive SpoVT-AbrB domains span residues 5–47 (EYQH…SLEE) and 76–119 (AAEV…DKSK).

Belongs to the MraZ family. As to quaternary structure, forms oligomers.

It is found in the cytoplasm. The protein resides in the nucleoid. The polypeptide is Transcriptional regulator MraZ (Acetivibrio thermocellus (strain ATCC 27405 / DSM 1237 / JCM 9322 / NBRC 103400 / NCIMB 10682 / NRRL B-4536 / VPI 7372) (Clostridium thermocellum)).